Consider the following 74-residue polypeptide: Large ribosomal subunit protein uL30 (74 aa).

It belongs to the universal ribosomal protein uL30 family. As to quaternary structure, part of the 50S ribosomal subunit.

The polypeptide is Large ribosomal subunit protein uL30 (Koribacter versatilis (strain Ellin345)).